Here is a 293-residue protein sequence, read N- to C-terminus: Histamine N-methyltransferase (293 aa).

Residue E28 participates in substrate binding. The S-adenosyl-L-methionine site is built by G60, E89, Q94, S120, and I142. N283 provides a ligand contact to substrate.

Belongs to the class I-like SAM-binding methyltransferase superfamily. HNMT family. As to quaternary structure, monomer.

It is found in the cytoplasm. The catalysed reaction is histamine + S-adenosyl-L-methionine = N(tau)-methylhistamine + S-adenosyl-L-homocysteine + H(+). In terms of biological role, inactivates histamine by N-methylation. Plays an important role in degrading histamine and in regulating the airway response to histamine. The sequence is that of Histamine N-methyltransferase (hnmt) from Xenopus tropicalis (Western clawed frog).